Reading from the N-terminus, the 215-residue chain is 7-cyano-7-deazaguanine synthase (215 aa).

Leu-8–Leu-18 contacts ATP. The Zn(2+) site is built by Cys-191, Cys-199, Cys-202, and Cys-205.

The protein belongs to the QueC family. As to quaternary structure, homodimer. Requires Zn(2+) as cofactor.

The catalysed reaction is 7-carboxy-7-deazaguanine + NH4(+) + ATP = 7-cyano-7-deazaguanine + ADP + phosphate + H2O + H(+). It participates in purine metabolism; 7-cyano-7-deazaguanine biosynthesis. Catalyzes the ATP-dependent conversion of 7-carboxy-7-deazaguanine (CDG) to 7-cyano-7-deazaguanine (preQ(0)). The sequence is that of 7-cyano-7-deazaguanine synthase from Carboxydothermus hydrogenoformans (strain ATCC BAA-161 / DSM 6008 / Z-2901).